The primary structure comprises 132 residues: Glycerol-3-phosphate cytidylyltransferase (132 aa).

CTP contacts are provided by residues 9 to 10 (TY) and 14 to 17 (HYGH). Lysine 44 lines the substrate pocket. CTP is bound at residue lysine 46. Position 77 (lysine 77) interacts with substrate. 113-120 (RTEGISTT) lines the CTP pocket.

This sequence belongs to the cytidylyltransferase family. As to quaternary structure, homotetramer or homodimer.

Its subcellular location is the cytoplasm. The catalysed reaction is sn-glycerol 3-phosphate + CTP + H(+) = CDP-glycerol + diphosphate. Its pathway is cell wall biogenesis; poly(ribitol phosphate) teichoic acid biosynthesis. Functionally, catalyzes the transfer of the cytidylyl group of CTP to sn-glycerol 3-phosphate so the activated glycerol 3-phosphate can be used for teichoic acid synthesis, via incorporation into both the linkage unit by TarB and TarF. This is Glycerol-3-phosphate cytidylyltransferase from Staphylococcus aureus (strain NCTC 8325 / PS 47).